The chain runs to 162 residues: Protein-export protein SecB (162 aa).

It belongs to the SecB family. Homotetramer, a dimer of dimers. One homotetramer interacts with 1 SecA dimer.

It localises to the cytoplasm. Functionally, one of the proteins required for the normal export of preproteins out of the cell cytoplasm. It is a molecular chaperone that binds to a subset of precursor proteins, maintaining them in a translocation-competent state. It also specifically binds to its receptor SecA. The sequence is that of Protein-export protein SecB from Pseudoalteromonas translucida (strain TAC 125).